The following is a 60-amino-acid chain: Metallothionein (60 aa).

Positions M1–C28 are beta. 20 residues coordinate a divalent metal cation: C4, C6, C12, C14, C18, C20, C23, C25, C28, C32, C33, C35, C36, C40, C43, C47, C49, C54, C58, and C59. The interval K29–Q60 is alpha.

The protein belongs to the metallothionein superfamily. Type 1 family.

In terms of biological role, metallothioneins have a high content of cysteine residues that bind various heavy metals. The polypeptide is Metallothionein (mt) (Perca fluviatilis (European perch)).